We begin with the raw amino-acid sequence, 172 residues long: Co-chaperone protein HscB (172 aa).

One can recognise a J domain in the interval 2–74 (DYFTLFGLPI…LKRAEYMLSL (73 aa)).

The protein belongs to the HscB family. Interacts with HscA and stimulates its ATPase activity. Interacts with IscU.

Co-chaperone involved in the maturation of iron-sulfur cluster-containing proteins. Seems to help targeting proteins to be folded toward HscA. The polypeptide is Co-chaperone protein HscB (Pectobacterium carotovorum subsp. carotovorum (strain PC1)).